A 164-amino-acid chain; its full sequence is Endoribonuclease YbeY (164 aa).

Histidine 111, histidine 115, and histidine 121 together coordinate Zn(2+). A disordered region spans residues 140–164; it reads ELGHPDPYADDDAQKHSTVTIKDSE. Over residues 155–164 the composition is skewed to polar residues; it reads HSTVTIKDSE.

Belongs to the endoribonuclease YbeY family. Requires Zn(2+) as cofactor.

The protein localises to the cytoplasm. Its function is as follows. Single strand-specific metallo-endoribonuclease involved in late-stage 70S ribosome quality control and in maturation of the 3' terminus of the 16S rRNA. This Pseudomonas fluorescens (strain SBW25) protein is Endoribonuclease YbeY.